We begin with the raw amino-acid sequence, 616 residues long: Angiotensin-converting enzyme (616 aa).

The first 23 residues, 1–23, serve as a signal peptide directing secretion; it reads MNLINFSYLNLLFGAGLFSVLES. Positions 27–610 constitute a Peptidase M2 domain; that stretch reads LNTESDAKKW…PRAENWMGGK (584 aa). N-linked (GlcNAc...) asparagine glycans are attached at residues Asn-61 and Asn-96. Cys-142 and Cys-152 are disulfide-bonded. 2 residues coordinate chloride: Arg-180 and Tyr-218. Asn-303 carries an N-linked (GlcNAc...) asparagine glycan. Cysteines 345 and 363 form a disulfide. Zn(2+) is bound at residue His-376. The active-site Proton acceptor is Glu-377. His-380 and Glu-404 together coordinate Zn(2+). An N-linked (GlcNAc...) asparagine glycan is attached at Asn-428. Residues Trp-478 and Arg-482 each contribute to the chloride site. His-506 serves as the catalytic Proton donor. Arg-515 is a binding site for chloride. A disulfide bond links Cys-531 and Cys-543. Residues Asn-535 and Asn-573 are each glycosylated (N-linked (GlcNAc...) asparagine).

The protein belongs to the peptidase M2 family. It depends on Zn(2+) as a cofactor. Chloride serves as cofactor. Epithelial cells of the midgut.

Its subcellular location is the secreted. It localises to the extracellular space. The enzyme catalyses Release of a C-terminal dipeptide, oligopeptide-|-Xaa-Yaa, when Xaa is not Pro, and Yaa is neither Asp nor Glu. Thus, conversion of angiotensin I to angiotensin II, with increase in vasoconstrictor activity, but no action on angiotensin II.. With respect to regulation, activated by chloride. Inhibited by captopril and lisinopril, and to a lesser extent by delaprilat. In Theromyzon tessulatum (Duck leech), this protein is Angiotensin-converting enzyme (ACE).